The sequence spans 376 residues: Pyruvate dehydrogenase E1 component subunit beta-2, mitochondrial (376 aa).

Residues 1–36 constitute a mitochondrion transit peptide; the sequence is MLGAARRQLGSGPMLGQVLRRLRPATAAAADAARAY. Glutamate 99 lines the thiamine diphosphate pocket. K(+) contacts are provided by isoleucine 152, alanine 200, isoleucine 201, and aspartate 203.

In terms of assembly, tetramer of 2 alpha and 2 beta subunits. Thiamine diphosphate serves as cofactor.

It localises to the mitochondrion matrix. The enzyme catalyses N(6)-[(R)-lipoyl]-L-lysyl-[protein] + pyruvate + H(+) = N(6)-[(R)-S(8)-acetyldihydrolipoyl]-L-lysyl-[protein] + CO2. In terms of biological role, the pyruvate dehydrogenase complex catalyzes the overall conversion of pyruvate to acetyl-CoA and CO(2). It contains multiple copies of three enzymatic components: pyruvate dehydrogenase (E1), dihydrolipoamide acetyltransferase (E2) and lipoamide dehydrogenase (E3). The protein is Pyruvate dehydrogenase E1 component subunit beta-2, mitochondrial of Oryza sativa subsp. japonica (Rice).